A 77-amino-acid chain; its full sequence is Sec-independent protein translocase protein TatA (77 aa).

The helical transmembrane segment at 2-22 (GFGGISIWQLLIILLIVVMLF) threads the bilayer. 2 stretches are compositionally biased toward basic and acidic residues: residues 46-59 (DNGE…EEPK) and 66-77 (QARKVEEPAKKD). The interval 46-77 (DNGEAEKPAVEEPKGQTIDAQARKVEEPAKKD) is disordered.

Belongs to the TatA/E family. In terms of assembly, the Tat system comprises two distinct complexes: a TatABC complex, containing multiple copies of TatA, TatB and TatC subunits, and a separate TatA complex, containing only TatA subunits. Substrates initially bind to the TatABC complex, which probably triggers association of the separate TatA complex to form the active translocon.

Its subcellular location is the cell inner membrane. Functionally, part of the twin-arginine translocation (Tat) system that transports large folded proteins containing a characteristic twin-arginine motif in their signal peptide across membranes. TatA could form the protein-conducting channel of the Tat system. The polypeptide is Sec-independent protein translocase protein TatA (Ectopseudomonas mendocina (strain ymp) (Pseudomonas mendocina)).